The following is a 231-amino-acid chain: Thiamine import ATP-binding protein ThiQ (231 aa).

One can recognise an ABC transporter domain in the interval 2 to 230 (LRLEDLDIRK…PPPALRGYLG (229 aa)). Position 32–39 (32–39 (GPSGAGKS)) interacts with ATP.

Belongs to the ABC transporter superfamily. Thiamine importer (TC 3.A.1.19.1) family. As to quaternary structure, the complex is composed of two ATP-binding proteins (ThiQ), two transmembrane proteins (ThiP) and a solute-binding protein (ThiB).

It is found in the cell inner membrane. It carries out the reaction thiamine(out) + ATP + H2O = thiamine(in) + ADP + phosphate + H(+). Its function is as follows. Part of the ABC transporter complex ThiBPQ involved in thiamine import. Responsible for energy coupling to the transport system. The chain is Thiamine import ATP-binding protein ThiQ from Ruegeria sp. (strain TM1040) (Silicibacter sp.).